Here is a 77-residue protein sequence, read N- to C-terminus: Putative defensin-like protein 162 (77 aa).

Positions 1–27 are cleaved as a signal peptide; sequence MAKQLCSYMFISMFILSAFLALPSAEG. Disulfide bonds link cysteine 34-cysteine 77, cysteine 44-cysteine 63, cysteine 49-cysteine 71, and cysteine 53-cysteine 73.

Belongs to the DEFL family.

The protein resides in the secreted. This is Putative defensin-like protein 162 (LCR37) from Arabidopsis thaliana (Mouse-ear cress).